Consider the following 305-residue polypeptide: Ornithine carbamoyltransferase (305 aa).

Residues 50-53, Q77, R101, and 128-131 each bind carbamoyl phosphate; these read STRT and HPCQ. L-ornithine-binding positions include N159, D222, and 226-227; that span reads SM. Carbamoyl phosphate contacts are provided by residues 262–263 and R290; that span reads CL.

Belongs to the aspartate/ornithine carbamoyltransferase superfamily. OTCase family.

It is found in the cytoplasm. The catalysed reaction is carbamoyl phosphate + L-ornithine = L-citrulline + phosphate + H(+). It participates in amino-acid biosynthesis; L-arginine biosynthesis; L-arginine from L-ornithine and carbamoyl phosphate: step 1/3. Reversibly catalyzes the transfer of the carbamoyl group from carbamoyl phosphate (CP) to the N(epsilon) atom of ornithine (ORN) to produce L-citrulline. The chain is Ornithine carbamoyltransferase from Synechococcus elongatus (strain ATCC 33912 / PCC 7942 / FACHB-805) (Anacystis nidulans R2).